The following is a 438-amino-acid chain: Transmembrane protein 184C (438 aa).

The next 7 helical transmembrane spans lie at 17–37, 48–68, 86–106, 176–196, 212–232, 254–274, and 287–307; these read LAVVLYLLSIVVAVPLCVWEL, AWFIAGIFLLLTIPISLWVIL, ILWMVPIYSLDSWIALKYPSI, VLQYTVVRPFTTIIALVCELL, YLVIINNMSQLFAMYCLLLFY, VVFVSFWQAVVIALLVKVGVI, and AVATGLQDFIICIEMFLAAIA. The tract at residues 358–438 is disordered; the sequence is PRKKFFPEDQ…EEPSEKPVAS (81 aa). Low complexity-rich tracts occupy residues 374 to 390 and 404 to 413; these read SLLSSSSQDALSVASSV and TVTPQTTPTT. Residues 426–438 are compositionally biased toward basic and acidic residues; it reads GVREEPSEKPVAS.

It belongs to the TMEM184 family.

The protein resides in the membrane. Functionally, possible tumor suppressor which may play a role in cell growth. This is Transmembrane protein 184C (TMEM184C) from Bos taurus (Bovine).